Consider the following 343-residue polypeptide: Signaling lymphocytic activation molecule (343 aa).

A signal peptide spans 1 to 24 (MDPKGSLSWRILLFLSLAFELSYG). The Extracellular segment spans residues 25 to 242 (TGGGVMDCPV…KQESSSESSP (218 aa)). Positions 29 to 138 (VMDCPVILQK…VQQFCKQLKL (110 aa)) constitute an Ig-like V-type domain. 9 N-linked (GlcNAc...) asparagine glycosylation sites follow: Asn-54, Asn-58, Asn-103, Asn-126, Asn-151, Asn-158, Asn-192, Asn-211, and Asn-226. An Ig-like C2-type domain is found at 145–228 (PEIKVLNKTQ…SSISRTFNLS (84 aa)). Cystine bridges form between Cys-161-Cys-232 and Cys-167-Cys-212. A helical transmembrane segment spans residues 243–265 (WMQYTLVPLGVVIIFILVFTAII). Over 266-343 (MMKRQGKSNH…VYASVTLPES (78 aa)) the chain is Cytoplasmic. Positions 286–291 (TIYAQV) match the ITSM 1 motif. Phosphotyrosine; by FYN occurs at positions 288, 315, and 335. Residues 313-318 (TIYVAA) carry the SH2-binding motif. The tract at residues 320–343 (EPAPESVQEPNPTTVYASVTLPES) is disordered. The segment covering 327–343 (QEPNPTTVYASVTLPES) has biased composition (polar residues). An ITSM 2 motif is present at residues 333–338 (TVYASV).

In terms of assembly, interacts (via cytoplasmic domain) with SH2D1A and SH2D1B; SH2D1A mediates association with FYN; SH2D1A binds to phosphorylated and not phosphorylated ITSM 1. Interacts (via cytoplasmic domain phosphorylated on tyrosine residues) with INPP5D and PTPN11; presence of SH2D1A facilitates binding to INPP5D. Interacts with MAP4K1. Interacts with PIK3C3, BECN1 and UVRAG; indicative for an association with PI3K complex II (PI3KC3-C2). Phosphorylated on tyrosine residues by FYN.

Its subcellular location is the cell membrane. Functionally, self-ligand receptor of the signaling lymphocytic activation molecule (SLAM) family. SLAM receptors triggered by homo- or heterotypic cell-cell interactions are modulating the activation and differentiation of a wide variety of immune cells and thus are involved in the regulation and interconnection of both innate and adaptive immune response. Activities are controlled by presence or absence of small cytoplasmic adapter proteins, SH2D1A/SAP and/or SH2D1B/EAT-2. SLAMF1-induced signal-transduction events in T-lymphocytes are different from those in B-cells. Two modes of SLAMF1 signaling seem to exist: one depending on SH2D1A (and perhaps SH2D1B) and another in which protein-tyrosine phosphatase 2C (PTPN11)-dependent signal transduction operates. Initially it has been proposed that association with SH2D1A prevents binding to inhibitory effectors including INPP5D/SHIP1 and PTPN11/SHP-2. However, signaling is also regulated by SH2D1A which can simultaneously interact with and recruit FYN which subsequently phosphorylates and activates SLAMF1. Mediates IL-2-independent proliferation of activated T-cells during immune responses and induces IFN-gamma production. Downstreaming signaling involves INPP5D, DOK1 and DOK2 leading to inhibited IFN-gamma production in T-cells, and PRKCQ, BCL10 and NFKB1 leading to increased T-cell activation and Th2 cytokine production. Promotes T-cell receptor-induced IL-4 secretion by CD4(+) cells. Inhibits antigen receptor-mediated production of IFN-gamma, but not IL-2, in CD4(-)/CD8(-) T-cells. Required for IL-4 production by germinal centers T follicular helper (T(Fh))cells. May inhibit CD40-induced signal transduction in monocyte-derived dendritic cells. May play a role in allergic responses and may regulate allergen-induced Th2 cytokine and Th1 cytokine secretion. In conjunction with SLAMF6 controls the transition between positive selection and the subsequent expansion and differentiation of the thymocytic natural killer T (NKT) cell lineage. Involved in the peripheral differentiation of indifferent natural killer T (iNKT) cells toward a regulatory NKT2 type. In macrophages involved in down-regulation of IL-12, TNF-alpha and nitric oxide in response to lipopolysaccharide (LPS). In B-cells activates the ERK signaling pathway independently of SH2D1A but implicating both, SYK and INPP5D, and activates Akt signaling dependent on SYK and SH2D1A. In conjunction with CD84/SLAMF5 and SLAMF6 may be a negative regulator of the humoral immune response. In terms of biological role, (Microbial infection) Involved in innate immune response against Gram-negative bacteria in macrophages; probably recognizes OmpC and/or OmpF on the bacterial surface, regulates phagosome maturation and recruitment of the PI3K complex II (PI3KC3-C2) leading to accumulated of PdtIns(3)P and NOX2 activity in the phagosomes. The sequence is that of Signaling lymphocytic activation molecule (Slamf1) from Mus musculus (Mouse).